A 180-amino-acid chain; its full sequence is Cytochrome b6-f complex iron-sulfur subunit (180 aa).

Residues 21–43 form a helical membrane-spanning segment; that stretch reads LLTFGTITGTALGALYPVVKYFI. Positions 66-162 constitute a Rieske domain; it reads VSEYLAKHLP…ATVTEDDKLV (97 aa). [2Fe-2S] cluster-binding residues include Cys-108, His-110, Cys-126, and His-129. The cysteines at positions 113 and 128 are disulfide-linked.

Belongs to the Rieske iron-sulfur protein family. In terms of assembly, the 4 large subunits of the cytochrome b6-f complex are cytochrome b6, subunit IV (17 kDa polypeptide, PetD), cytochrome f and the Rieske protein, while the 4 small subunits are PetG, PetL, PetM and PetN. The complex functions as a dimer. It depends on [2Fe-2S] cluster as a cofactor.

The protein resides in the cellular thylakoid membrane. It carries out the reaction 2 oxidized [plastocyanin] + a plastoquinol + 2 H(+)(in) = 2 reduced [plastocyanin] + a plastoquinone + 4 H(+)(out). Its function is as follows. Component of the cytochrome b6-f complex, which mediates electron transfer between photosystem II (PSII) and photosystem I (PSI), cyclic electron flow around PSI, and state transitions. The chain is Cytochrome b6-f complex iron-sulfur subunit from Thermosynechococcus vestitus (strain NIES-2133 / IAM M-273 / BP-1).